A 367-amino-acid chain; its full sequence is DNA replication and repair protein RecF (367 aa).

30–37 (GNNAQGKT) serves as a coordination point for ATP.

Belongs to the RecF family.

The protein localises to the cytoplasm. In terms of biological role, the RecF protein is involved in DNA metabolism; it is required for DNA replication and normal SOS inducibility. RecF binds preferentially to single-stranded, linear DNA. It also seems to bind ATP. This is DNA replication and repair protein RecF from Clostridium tetani (strain Massachusetts / E88).